The sequence spans 235 residues: Sugar fermentation stimulation protein homolog (235 aa).

It belongs to the SfsA family.

The chain is Sugar fermentation stimulation protein homolog from Photorhabdus laumondii subsp. laumondii (strain DSM 15139 / CIP 105565 / TT01) (Photorhabdus luminescens subsp. laumondii).